Consider the following 163-residue polypeptide: Carbon monoxide dehydrogenase small chain (163 aa).

Residues 4-80 (KIITVNVNGK…GSEVLTVEGL (77 aa)) enclose the 2Fe-2S ferredoxin-type domain. [2Fe-2S] cluster is bound by residues Cys-42, Cys-47, Cys-50, Cys-62, Cys-101, Cys-104, Cys-136, and Cys-138.

Dimer of heterotrimers. Each heterotrimer consists of a large, a medium and a small subunit. Requires [2Fe-2S] cluster as cofactor.

It catalyses the reaction CO + a quinone + H2O = a quinol + CO2. Functionally, catalyzes the oxidation of carbon monoxide to carbon dioxide. This is Carbon monoxide dehydrogenase small chain (cutS) from Hydrogenophaga pseudoflava (Pseudomonas carboxydoflava).